The primary structure comprises 309 residues: Peptide methionine sulfoxide reductase MsrA/MsrB (309 aa).

Residues 1–153 (MIYLAGGCFW…PNGYCHIDIN (153 aa)) are peptide methionine sulfoxide reductase A. The active site involves C8. Residues 170–293 (ATEIKEKLSA…NSLSITFIPK (124 aa)) form the MsrB domain. C282 serves as the catalytic Nucleophile.

In the N-terminal section; belongs to the MsrA Met sulfoxide reductase family. This sequence in the C-terminal section; belongs to the MsrB Met sulfoxide reductase family.

It catalyses the reaction L-methionyl-[protein] + [thioredoxin]-disulfide + H2O = L-methionyl-(S)-S-oxide-[protein] + [thioredoxin]-dithiol. The catalysed reaction is [thioredoxin]-disulfide + L-methionine + H2O = L-methionine (S)-S-oxide + [thioredoxin]-dithiol. It carries out the reaction L-methionyl-[protein] + [thioredoxin]-disulfide + H2O = L-methionyl-(R)-S-oxide-[protein] + [thioredoxin]-dithiol. Has an important function as a repair enzyme for proteins that have been inactivated by oxidation. Catalyzes the reversible oxidation-reduction of methionine sulfoxide in proteins to methionine. This chain is Peptide methionine sulfoxide reductase MsrA/MsrB (msrAB), found in Streptococcus pyogenes serotype M1.